Consider the following 410-residue polypeptide: Argininosuccinate synthase (410 aa).

Position 6–14 (6–14 (AYSGGLDTS)) interacts with ATP. L-citrulline is bound at residue tyrosine 84. ATP is bound at residue glycine 114. L-aspartate-binding residues include threonine 116, asparagine 120, and aspartate 121. Asparagine 120 contributes to the L-citrulline binding site. L-citrulline-binding residues include arginine 124, serine 169, serine 178, glutamate 254, and tyrosine 266.

This sequence belongs to the argininosuccinate synthase family. Type 1 subfamily. In terms of assembly, homotetramer.

Its subcellular location is the cytoplasm. It carries out the reaction L-citrulline + L-aspartate + ATP = 2-(N(omega)-L-arginino)succinate + AMP + diphosphate + H(+). It participates in amino-acid biosynthesis; L-arginine biosynthesis; L-arginine from L-ornithine and carbamoyl phosphate: step 2/3. This Pyrococcus furiosus (strain ATCC 43587 / DSM 3638 / JCM 8422 / Vc1) protein is Argininosuccinate synthase.